We begin with the raw amino-acid sequence, 276 residues long: Phosphatidylglycerol--prolipoprotein diacylglyceryl transferase (276 aa).

7 consecutive transmembrane segments (helical) span residues 17–37 (LAIR…LWFG), 59–79 (MLFF…VLFY), 95–115 (WEGG…MWLF), 129–149 (FIAP…FING), 176–196 (SQLY…WLFA), 202–222 (MGAV…AAEF), and 237–257 (LSMG…MVVW). Arg142 serves as a coordination point for a 1,2-diacyl-sn-glycero-3-phospho-(1'-sn-glycerol).

This sequence belongs to the Lgt family.

It is found in the cell inner membrane. It catalyses the reaction L-cysteinyl-[prolipoprotein] + a 1,2-diacyl-sn-glycero-3-phospho-(1'-sn-glycerol) = an S-1,2-diacyl-sn-glyceryl-L-cysteinyl-[prolipoprotein] + sn-glycerol 1-phosphate + H(+). It participates in protein modification; lipoprotein biosynthesis (diacylglyceryl transfer). Functionally, catalyzes the transfer of the diacylglyceryl group from phosphatidylglycerol to the sulfhydryl group of the N-terminal cysteine of a prolipoprotein, the first step in the formation of mature lipoproteins. This is Phosphatidylglycerol--prolipoprotein diacylglyceryl transferase from Cupriavidus pinatubonensis (strain JMP 134 / LMG 1197) (Cupriavidus necator (strain JMP 134)).